Consider the following 286-residue polypeptide: 3-methyl-2-oxobutanoate hydroxymethyltransferase (286 aa).

Aspartate 51 and aspartate 90 together coordinate Mg(2+). 3-methyl-2-oxobutanoate-binding positions include 51-52 (DS), aspartate 90, and lysine 120. Residue glutamate 122 participates in Mg(2+) binding. The Proton acceptor role is filled by glutamate 189. Residues 263–286 (TFPGPSHVFSGSKASSDLNGGDES) are disordered.

It belongs to the PanB family. In terms of assembly, homodecamer; pentamer of dimers. Mg(2+) is required as a cofactor.

It localises to the cytoplasm. The catalysed reaction is 3-methyl-2-oxobutanoate + (6R)-5,10-methylene-5,6,7,8-tetrahydrofolate + H2O = 2-dehydropantoate + (6S)-5,6,7,8-tetrahydrofolate. Its pathway is cofactor biosynthesis; (R)-pantothenate biosynthesis; (R)-pantoate from 3-methyl-2-oxobutanoate: step 1/2. In terms of biological role, catalyzes the reversible reaction in which hydroxymethyl group from 5,10-methylenetetrahydrofolate is transferred onto alpha-ketoisovalerate to form ketopantoate. The protein is 3-methyl-2-oxobutanoate hydroxymethyltransferase of Mesorhizobium japonicum (strain LMG 29417 / CECT 9101 / MAFF 303099) (Mesorhizobium loti (strain MAFF 303099)).